The following is an 83-amino-acid chain: MLGINVEKSNENLIINWQLSKIEIPIKEINDVFLDPNYGGEEKSAVRIGFPYGSTDRVVIKTARNTYILFTTNPALIMSKIVS.

It belongs to the UPF0457 family.

This Bacillus subtilis (strain 168) protein is UPF0457 protein YnzG (ynzG).